The primary structure comprises 44 residues: Photosystem I reaction center subunit IX (44 aa).

A helical transmembrane segment spans residues 7 to 27 (YLSVAPVLSTLWFGALAGLLI).

It belongs to the PsaJ family.

The protein localises to the plastid. It is found in the chloroplast thylakoid membrane. Functionally, may help in the organization of the PsaE and PsaF subunits. This chain is Photosystem I reaction center subunit IX, found in Coffea arabica (Arabian coffee).